Reading from the N-terminus, the 192-residue chain is GTP cyclohydrolase-2 (192 aa).

50 to 54 (RLHSE) contacts GTP. Zn(2+) is bound by residues cysteine 55, cysteine 66, and cysteine 68. Residues 92-94 (EGR) and threonine 114 contribute to the GTP site. Aspartate 126 functions as the Proton acceptor in the catalytic mechanism. The Nucleophile role is filled by arginine 128. Positions 149 and 154 each coordinate GTP.

It belongs to the GTP cyclohydrolase II family. It depends on Zn(2+) as a cofactor.

The catalysed reaction is GTP + 4 H2O = 2,5-diamino-6-hydroxy-4-(5-phosphoribosylamino)-pyrimidine + formate + 2 phosphate + 3 H(+). The protein operates within cofactor biosynthesis; riboflavin biosynthesis; 5-amino-6-(D-ribitylamino)uracil from GTP: step 1/4. Its function is as follows. Catalyzes the conversion of GTP to 2,5-diamino-6-ribosylamino-4(3H)-pyrimidinone 5'-phosphate (DARP), formate and pyrophosphate. This Helicobacter acinonychis (strain Sheeba) protein is GTP cyclohydrolase-2.